The sequence spans 377 residues: Leukocyte elastase inhibitor (377 aa).

N-acetylmethionine is present on Met-1.

It belongs to the serpin family. Ov-serpin subfamily.

The protein resides in the cytoplasm. Functionally, regulates the activity of the neutrophil proteases. In Xenopus laevis (African clawed frog), this protein is Leukocyte elastase inhibitor (serpinb1).